The primary structure comprises 341 residues: Two-component response regulator EHD1 (341 aa).

Residues 12 to 127 form the Response regulatory domain; it reads RVLVIDDDCS…ELSNIWQHIF (116 aa). The residue at position 63 (Asp63) is a 4-aspartylphosphate. The 60-residue stretch at 195–254 folds into the HTH myb-type domain; sequence DLGKSRLTWTTQLHRQFIAAVNHLGEDKAVPKKILGIMKVKHLTREQVASHLQKYRMQLK. A DNA-binding region (H-T-H motif) is located at residues 225 to 250; it reads PKKILGIMKVKHLTREQVASHLQKYR.

In terms of processing, two-component system major event consists of a His-to-Asp phosphorelay between a sensor histidine kinase (HK) and a response regulator (RR). In plants, the His-to-Asp phosphorelay involves an additional intermediate named Histidine-containing phosphotransfer protein (HPt). This multistep phosphorelay consists of a His-Asp-His-Asp sequential transfer of a phosphate group between first a His and an Asp of the HK protein, followed by the transfer to a conserved His of the HPt protein and finally the transfer to an Asp in the receiver domain of the RR protein.

The protein localises to the nucleus. Functionally, transcriptional activator that acts as a floral inducer to promote short-day (SD) flowering pathway. Activates Hd3a and other FT-like genes independently from Hd1. May also activate MADS-box transcription factors involved in flowering regulation. This is Two-component response regulator EHD1 (EHD1) from Oryza sativa subsp. indica (Rice).